We begin with the raw amino-acid sequence, 136 residues long: Protein PsiE (136 aa).

A run of 4 helical transmembrane segments spans residues 15 to 35, 55 to 75, 82 to 102, and 108 to 128; these read ILQT…VVFL, YELV…ALIV, FHFP…RLII, and PLDV…LWLC.

Belongs to the PsiE family.

Its subcellular location is the cell inner membrane. In Escherichia coli (strain SE11), this protein is Protein PsiE.